The following is a 333-amino-acid chain: Ketol-acid reductoisomerase (NADP(+)) (333 aa).

Residues Ala2–Thr182 enclose the KARI N-terminal Rossmann domain. NADP(+) is bound by residues Tyr25 to Gln28, Ser51, Ser53, and Asp83 to Gln86. His108 is an active-site residue. Position 134 (Gly134) interacts with NADP(+). The region spanning Thr183–Val328 is the KARI C-terminal knotted domain. Mg(2+) is bound by residues Asp191, Glu195, Glu227, and Glu231. Ser252 provides a ligand contact to substrate.

Belongs to the ketol-acid reductoisomerase family. Mg(2+) serves as cofactor.

The enzyme catalyses (2R)-2,3-dihydroxy-3-methylbutanoate + NADP(+) = (2S)-2-acetolactate + NADPH + H(+). The catalysed reaction is (2R,3R)-2,3-dihydroxy-3-methylpentanoate + NADP(+) = (S)-2-ethyl-2-hydroxy-3-oxobutanoate + NADPH + H(+). It functions in the pathway amino-acid biosynthesis; L-isoleucine biosynthesis; L-isoleucine from 2-oxobutanoate: step 2/4. Its pathway is amino-acid biosynthesis; L-valine biosynthesis; L-valine from pyruvate: step 2/4. Involved in the biosynthesis of branched-chain amino acids (BCAA). Catalyzes an alkyl-migration followed by a ketol-acid reduction of (S)-2-acetolactate (S2AL) to yield (R)-2,3-dihydroxy-isovalerate. In the isomerase reaction, S2AL is rearranged via a Mg-dependent methyl migration to produce 3-hydroxy-3-methyl-2-ketobutyrate (HMKB). In the reductase reaction, this 2-ketoacid undergoes a metal-dependent reduction by NADPH to yield (R)-2,3-dihydroxy-isovalerate. This chain is Ketol-acid reductoisomerase (NADP(+)), found in Streptomyces avermitilis (strain ATCC 31267 / DSM 46492 / JCM 5070 / NBRC 14893 / NCIMB 12804 / NRRL 8165 / MA-4680).